The sequence spans 870 residues: Histidine biosynthesis trifunctional protein (870 aa).

Residues 1–285 (METTLPLPFL…KFVVKQKGRF (285 aa)) are phosphoribosyl-AMP cyclohydrolase. Residues 286–367 (CHLDQSGCFG…FYFALTRAVA (82 aa)) are phosphoribosyl-ATP pyrophosphohydrolase. Residues 368-870 (AGVTLADIER…IRLEHMSKSN (503 aa)) form a histidinol dehydrogenase region. Zn(2+) contacts are provided by glutamine 693 and histidine 696. Residues glutamate 762 and histidine 763 contribute to the active site. Zn(2+) contacts are provided by aspartate 796 and histidine 855.

In the C-terminal section; belongs to the histidinol dehydrogenase family. The cofactor is Zn(2+).

It catalyses the reaction 1-(5-phospho-beta-D-ribosyl)-5'-AMP + H2O = 1-(5-phospho-beta-D-ribosyl)-5-[(5-phospho-beta-D-ribosylamino)methylideneamino]imidazole-4-carboxamide. It carries out the reaction 1-(5-phospho-beta-D-ribosyl)-ATP + H2O = 1-(5-phospho-beta-D-ribosyl)-5'-AMP + diphosphate + H(+). The catalysed reaction is L-histidinol + 2 NAD(+) + H2O = L-histidine + 2 NADH + 3 H(+). It participates in amino-acid biosynthesis; L-histidine biosynthesis; L-histidine from 5-phospho-alpha-D-ribose 1-diphosphate: step 2/9. The protein operates within amino-acid biosynthesis; L-histidine biosynthesis; L-histidine from 5-phospho-alpha-D-ribose 1-diphosphate: step 3/9. It functions in the pathway amino-acid biosynthesis; L-histidine biosynthesis; L-histidine from 5-phospho-alpha-D-ribose 1-diphosphate: step 9/9. The polypeptide is Histidine biosynthesis trifunctional protein (his-3) (Neurospora crassa (strain ATCC 24698 / 74-OR23-1A / CBS 708.71 / DSM 1257 / FGSC 987)).